Reading from the N-terminus, the 473-residue chain is Photosystem II CP43 reaction center protein (473 aa).

Residues 1–14 (MKILYSLRRFYHVE) constitute a propeptide that is removed on maturation. Position 15 is an N-acetylthreonine (threonine 15). Position 15 is a phosphothreonine (threonine 15). 5 consecutive transmembrane segments (helical) span residues 69 to 93 (LFEV…PHLA), 134 to 155 (LLGP…QDRN), 178 to 200 (KALY…RKIT), 255 to 275 (KPFA…LSYS), and 291 to 312 (WFNN…ASQA). Glutamate 367 provides a ligand contact to [CaMn4O5] cluster. A helical membrane pass occupies residues 447–471 (RARAAAAGFEKGIDRDLEPVVYMTP).

The protein belongs to the PsbB/PsbC family. PsbC subfamily. PSII is composed of 1 copy each of membrane proteins PsbA, PsbB, PsbC, PsbD, PsbE, PsbF, PsbH, PsbI, PsbJ, PsbK, PsbL, PsbM, PsbT, PsbX, PsbY, PsbZ, Psb30/Ycf12, at least 3 peripheral proteins of the oxygen-evolving complex and a large number of cofactors. It forms dimeric complexes. Binds multiple chlorophylls and provides some of the ligands for the Ca-4Mn-5O cluster of the oxygen-evolving complex. It may also provide a ligand for a Cl- that is required for oxygen evolution. PSII binds additional chlorophylls, carotenoids and specific lipids. serves as cofactor. In terms of processing, phosphorylated in both bundle sheath and mesophyll cells, phosphorylation increases when cells are grown under high rather than low light regimes (70 vs 900 umol photons/m-2/s).

The protein resides in the plastid. The protein localises to the chloroplast thylakoid membrane. Functionally, one of the components of the core complex of photosystem II (PSII). It binds chlorophyll and helps catalyze the primary light-induced photochemical processes of PSII. PSII is a light-driven water:plastoquinone oxidoreductase, using light energy to abstract electrons from H(2)O, generating O(2) and a proton gradient subsequently used for ATP formation. This chain is Photosystem II CP43 reaction center protein, found in Zea mays (Maize).